We begin with the raw amino-acid sequence, 496 residues long: Gamma-aminobutyric acid receptor subunit beta-like (496 aa).

The segment at residues 1–20 is a signal peptide (or 27); sequence MTCFTRVGVSCGLFFFLLGA. The Extracellular portion of the chain corresponds to 21-258; it reads QLQLIRCIRK…SFKLQRNIGY (238 aa). 2 N-linked (GlcNAc...) asparagine glycosylation sites follow: Asn-39 and Asn-189. The cysteines at positions 176 and 190 are disulfide-linked. Transmembrane regions (helical) follow at residues 259 to 280, 285 to 306, and 318 to 342; these read FVFQ…SFWI, TSAR…STGV, and AIDI…AVNY. At 343 to 472 the chain is on the cytoplasmic side; the sequence is TYWGKRAKKK…KIKDVNIIDK (130 aa). Residues 473 to 494 form a helical membrane-spanning segment; sequence YSRMIFPISFLAFNLGYWLFYI.

The protein belongs to the ligand-gated ion channel (TC 1.A.9) family. Gamma-aminobutyric acid receptor (TC 1.A.9.5) subfamily. Generally pentameric. There are five types of GABA(A) receptor chains: alpha, beta, gamma, delta, and rho. Interacts with Grd (alpha chain).

The protein resides in the postsynaptic cell membrane. It is found in the cell membrane. Functionally, GABA, an inhibitory neurotransmitter, mediates neuronal inhibition by binding to the GABA receptor and opening an integral chloride channel. Combines with the ligand-gated ion channel subunit GRD to form cation-selective GABA-gated ion channels when coexpressed in Xenopus laevis oocytes. This chain is Gamma-aminobutyric acid receptor subunit beta-like (Lcch3), found in Drosophila melanogaster (Fruit fly).